A 469-amino-acid polypeptide reads, in one-letter code: Calcium-binding mitochondrial carrier protein SCaMC-2 (469 aa).

Over 1-189 the chain is Mitochondrial intermembrane; that stretch reads MLCLCLYVPL…ERQTGMWWRH (189 aa). 3 consecutive EF-hand domains span residues 47-80, 78-113, and 114-149; these read TYRQ…QDHE, DHEK…LGVK, and ISEQ…HPVE. The Ca(2+) site is built by Asp-60, Asp-62, Asp-64, Gln-66, and Glu-71. Solcar repeat units lie at residues 184–270, 278–363, and 375–463; these read GMWW…IKRL, LRIH…LKNA, and PGVF…LKIT. The chain crosses the membrane as a helical span at residues 190 to 207; it reads LVAGGGAGAVSRTCTAPL. Residues 208–244 are Mitochondrial matrix-facing; it reads DRLKVLMQVHASRSNNMCIVGGFTQMIREGGARSLWR. Residues 245–264 form a helical membrane-spanning segment; it reads GNGINVLKIAPESAIKFMAY. The Mitochondrial intermembrane portion of the chain corresponds to 265–287; that stretch reads EQIKRLIGSDQETLRIHERLVAG. The helical transmembrane segment at 288 to 301 threads the bilayer; the sequence is SLAGAIAQSSIYPM. Residues 302–337 are Mitochondrial matrix-facing; the sequence is EVLKTRMALRKTGQYSGMLDCARKILAREGMAAFYK. The helical transmembrane segment at 338 to 357 threads the bilayer; sequence GYVPNMLGIIPYAGIDLAVY. At 358-380 the chain is on the mitochondrial intermembrane side; that stretch reads ETLKNAWLQRYAVNSADPGVFVL. A helical membrane pass occupies residues 381 to 398; it reads LACGTMSSTCGQLASYPL. The Mitochondrial matrix segment spans residues 399–437; the sequence is ALVRTRMQAQASMEGAPEVTMSSLFKQILRTEGAFGLYR. The helical transmembrane segment at 438–457 threads the bilayer; the sequence is GLAPNFMKVIPAVSISYVVY. Residues 458–469 are Mitochondrial intermembrane-facing; sequence ENLKITLGVQSR.

This sequence belongs to the mitochondrial carrier (TC 2.A.29) family.

Its subcellular location is the mitochondrion inner membrane. Its function is as follows. Calcium-dependent mitochondrial solute carrier. Mitochondrial solute carriers shuttle metabolites, nucleotides, and cofactors through the mitochondrial inner membrane. May act as a ATP-Mg/Pi exchanger that mediates the transport of Mg-ATP in exchange for phosphate, catalyzing the net uptake or efflux of adenine nucleotides into or from the mitochondria. This chain is Calcium-binding mitochondrial carrier protein SCaMC-2 (SLC25A25), found in Bos taurus (Bovine).